A 281-amino-acid polypeptide reads, in one-letter code: Proteasome subunit beta (281 aa).

A propeptide spans 1–53 (MEANTRSTGRLPAAFLTPGSSSFMDFLGEHQPEMLPGNRQLPPVQGVIEAPHG) (removed in mature form; by autocatalysis). The Nucleophile role is filled by Thr54.

This sequence belongs to the peptidase T1B family. In terms of assembly, the 20S proteasome core is composed of 14 alpha and 14 beta subunits that assemble into four stacked heptameric rings, resulting in a barrel-shaped structure. The two inner rings, each composed of seven catalytic beta subunits, are sandwiched by two outer rings, each composed of seven alpha subunits. The catalytic chamber with the active sites is on the inside of the barrel. Has probably a gated structure, the ends of the cylinder being occluded by the N-termini of the alpha-subunits. Is likely capped by the proteasome-associated ATPase, ARC.

The protein resides in the cytoplasm. It carries out the reaction Cleavage of peptide bonds with very broad specificity.. It functions in the pathway protein degradation; proteasomal Pup-dependent pathway. The formation of the proteasomal ATPase ARC-20S proteasome complex, likely via the docking of the C-termini of ARC into the intersubunit pockets in the alpha-rings, may trigger opening of the gate for substrate entry. Interconversion between the open-gate and close-gate conformations leads to a dynamic regulation of the 20S proteasome proteolysis activity. Peptidolytic activity is completely inhibited by lactacystin, and to a lesser extent, by N-acetyl-Leu-Leu-norleucinal (Ac-LLnL) and benzoyloxycarbonyl-Leu-Leu-Leu-vinylsulfone (Z-LLL-VS) in vitro. In terms of biological role, component of the proteasome core, a large protease complex with broad specificity involved in protein degradation. The S.coelicolor proteasome is able to cleave oligopeptides after hydrophobic residues, but not after basic or acidic residues, thus displaying chymotrypsin-like activity but not trypsin-like activity. The polypeptide is Proteasome subunit beta (Streptomyces coelicolor (strain ATCC BAA-471 / A3(2) / M145)).